The chain runs to 144 residues: Putative low molecular weight protein-tyrosine-phosphatase (144 aa).

C9 (nucleophile) is an active-site residue. R15 is a catalytic residue. D115 serves as the catalytic Proton donor.

The protein belongs to the low molecular weight phosphotyrosine protein phosphatase family.

The catalysed reaction is O-phospho-L-tyrosyl-[protein] + H2O = L-tyrosyl-[protein] + phosphate. This chain is Putative low molecular weight protein-tyrosine-phosphatase, found in Klebsiella pneumoniae.